A 343-amino-acid polypeptide reads, in one-letter code: Aspartate carbamoyltransferase catalytic subunit (343 aa).

2 residues coordinate carbamoyl phosphate: arginine 91 and threonine 92. Residue lysine 119 participates in L-aspartate binding. Arginine 141, histidine 171, and glutamine 174 together coordinate carbamoyl phosphate. 2 residues coordinate L-aspartate: arginine 204 and arginine 259. Residues glycine 300 and proline 301 each coordinate carbamoyl phosphate.

The protein belongs to the aspartate/ornithine carbamoyltransferase superfamily. ATCase family. In terms of assembly, heterododecamer (2C3:3R2) of six catalytic PyrB chains organized as two trimers (C3), and six regulatory PyrI chains organized as three dimers (R2).

The enzyme catalyses carbamoyl phosphate + L-aspartate = N-carbamoyl-L-aspartate + phosphate + H(+). Its pathway is pyrimidine metabolism; UMP biosynthesis via de novo pathway; (S)-dihydroorotate from bicarbonate: step 2/3. In terms of biological role, catalyzes the condensation of carbamoyl phosphate and aspartate to form carbamoyl aspartate and inorganic phosphate, the committed step in the de novo pyrimidine nucleotide biosynthesis pathway. In Burkholderia vietnamiensis (strain G4 / LMG 22486) (Burkholderia cepacia (strain R1808)), this protein is Aspartate carbamoyltransferase catalytic subunit.